A 56-amino-acid chain; its full sequence is Sex-specific storage protein 1 (56 aa).

The protein belongs to the hemocyanin family. Expressed in fat body and ovary.

It localises to the secreted. In terms of biological role, larval storage protein (LSP) which may serve as a store of amino acids for synthesis of adult proteins. The biosynthesis, accumulation and sequestration of storage protein-1 takes place during metamorphosis and saves energy for the non-feeding pupal stage. May also be essential for egg formation. The sequence is that of Sex-specific storage protein 1 from Amsacta albistriga (Red hairy caterpillar).